Reading from the N-terminus, the 372-residue chain is Heat-inducible transcription repressor HrcA (372 aa).

Positions 300 to 334 (YGRSGAAGEPAGNDPVGEPETESETESQTNDTEPI) are disordered.

Belongs to the HrcA family.

Its function is as follows. Negative regulator of class I heat shock genes (grpE-dnaK-dnaJ and groELS operons). Prevents heat-shock induction of these operons. In Bifidobacterium longum (strain DJO10A), this protein is Heat-inducible transcription repressor HrcA.